The primary structure comprises 1560 residues: MHDARIFNSSSNKTMNQNDEAGKSKIKPLRTNQRRVIGASKSSSHMGSHVGTTLIIGKNSHSTSHGVRNNSPENTIVIGRRNFSDGQIEYTKPASHSNKFKKDSILRDPNIDSNVEASKKLSEQIQLTVWFHEPRTSTEDVIIDASVIPGLKEGDICELVPLNTFKPHKKPKRLIFIIKNQSLLSKSSSLHTSNNNNNAGATTSTLSANNNNTTKTKTNFQISLISNPLQNLMDLPPRSLVQLKTILDVESIEADTIEIFIKDINLSRDLMWTFSSSLVGTCVYSEKRLTFLSNRTGVVKKIYKNGNELFSALICEKTKVVFRSKSAKLVFLVQLSREMWHFEETGEIMFHKLVNTLFPKIFKKWRDKNTHHAITIVLFTSVDLTNIPWTSLGQGERPNNRRDYFRVVVDQVSIFHWDRIMANLRLEFANFKRDIMLNCQPENNGKFTMAGQSLPSVKGNVLEAINVGIHLVNDRFKNTDLKHSLNHFILVTPGTGLFDVDYSLMHETSKKMLSIDCALDIVCLSQPPLHIVPLFRYRDPSKDGQISHCVPHWCDISFYKDSTANSTQWIPHCKIYELQMMGVMENEINDVKIERYRVPNEAKSMVEAMDKYDSDVFKPVNKDSDSKVTRELSSSPEQSTINSKTGTPKENSKPLSLIWNNRTSLLPNSSTARIDVSTTNSSVLGTVANSGKDVSALSSLYTLNKTSADKSVVHAPSIRADSRKGVKENVSRDRKEFNEITRTKLRPRLQKTEEFYKSDDSVSNTSKSRDILDSKSRNKQSSTKVEEEFETLTNLLWTEIRNPSKESHSDMLSFLRLSRWNDIFPSNIKRRLVKWRSFESPAALPVTTSIFPSTKQLETDYSFQIYSVFLNSENDLEIESTHDLMREMIQLRLLLGFQICYSDQVKKFESSRKPGGNAESLIKYFPKGSCYGSRIYMSLDDEIHRISCDYNGNLYVQMYRKIEELKHSRLLGSKDYRQQSYVPLIRTRYVDEYAPAKFDFINTKPLKYNWNQFDQLIAGYDDAIPPEKRQFHKMKFVVLPANIPKNAYFISNENLTDEEIRVEGLRKLIGLIERGKFVKSDDKESKRKEEILPEISFYTGNLYEFLSDQAETYDATGNEPSNSLMLGENMRFTKSIKLSQLAQELQSPTGVRLVDRTWHFKRHLHCFLGNELVSWFIECFEDIDNRNDATSYGQSLMDRGMIKHVESRHGFLDGYYFYTFEGEYIDKNYKPERLNSGWFNRKKNSSEKGSAVTSPTYTRNNSDTESAKSPVFPVQDNLDLRKITSNSIGQHMYDSETSSMAGSSTKTKQKKKFILSRSVKFNADPLKKSFRPEIVTVHYDRVHNPEHCYHIRLQWLNTTKKFIDDAILNWSRLCERHGLKLVETPWLELCTIPQVNPFHSFVDLKLVINPWTDPEFSDPNILKDNKFYYHLYLMKKSDFLLDNRSTVFFSKDHIEISYSWGKPIFQYAQYIHKTGAYIVELRDNGDLFLAPNNIHITRLNTSLSSVPEQDYLKSYKMDSQKVMLKFRSACTNEKILRGIFKEAKENWREKCSEVVLPAIN.

4 disordered regions span residues 1-30 (MHDARIFNSSSNKTMNQNDEAGKSKIKPLR), 188-212 (SSLHTSNNNNNAGATTSTLSANNNN), 617-654 (FKPVNKDSDSKVTRELSSSPEQSTINSKTGTPKENSKP), and 756-784 (YKSDDSVSNTSKSRDILDSKSRNKQSSTK). Over residues 7–19 (FNSSSNKTMNQND) the composition is skewed to polar residues. Basic and acidic residues predominate over residues 617 to 630 (FKPVNKDSDSKVTR). Residues 631–649 (ELSSSPEQSTINSKTGTPK) show a composition bias toward polar residues. Over residues 767–776 (KSRDILDSKS) the composition is skewed to basic and acidic residues. The 76-residue stretch at 1147 to 1222 (SPTGVRLVDR…DGYYFYTFEG (76 aa)) folds into the DEP domain. The interval 1237-1270 (GWFNRKKNSSEKGSAVTSPTYTRNNSDTESAKSP) is disordered. Residues 1247–1264 (EKGSAVTSPTYTRNNSDT) are compositionally biased toward polar residues.

The protein belongs to the IML1 family.

The protein localises to the vacuole membrane. The sequence is that of Vacuolar membrane-associated protein IML1 (IML1) from Debaryomyces hansenii (strain ATCC 36239 / CBS 767 / BCRC 21394 / JCM 1990 / NBRC 0083 / IGC 2968) (Yeast).